A 57-amino-acid polypeptide reads, in one-letter code: Putative secreted protein MT0250 (57 aa).

Positions 1–32 (MNRIVAPAAASVVVGLLLGAAAIFGVTLMVQQ) are cleaved as a signal peptide. The disordered stretch occupies residues 34 to 57 (KKPPLPGGDPSSSVLNRVEYGNRS).

The sequence is that of Putative secreted protein MT0250 from Mycobacterium tuberculosis (strain CDC 1551 / Oshkosh).